We begin with the raw amino-acid sequence, 173 residues long: NADH-ubiquinone oxidoreductase chain 6 (173 aa).

The next 4 membrane-spanning stretches (helical) occupy residues Ala24–Val44, Phe47–Tyr67, Met81–Phe101, and Leu142–Thr162.

This sequence belongs to the complex I subunit 6 family.

The protein resides in the mitochondrion membrane. It carries out the reaction a ubiquinone + NADH + 5 H(+)(in) = a ubiquinol + NAD(+) + 4 H(+)(out). Its function is as follows. Core subunit of the mitochondrial membrane respiratory chain NADH dehydrogenase (Complex I) that is believed to belong to the minimal assembly required for catalysis. Complex I functions in the transfer of electrons from NADH to the respiratory chain. The immediate electron acceptor for the enzyme is believed to be ubiquinone. This chain is NADH-ubiquinone oxidoreductase chain 6, found in Aedes aegypti (Yellowfever mosquito).